The chain runs to 206 residues: Small ribosomal subunit protein uS4 (206 aa).

Positions 96 to 156 (RRLDNVVYRM…EKSKNQLRIK (61 aa)) constitute an S4 RNA-binding domain.

The protein belongs to the universal ribosomal protein uS4 family. In terms of assembly, part of the 30S ribosomal subunit. Contacts protein S5. The interaction surface between S4 and S5 is involved in control of translational fidelity.

In terms of biological role, one of the primary rRNA binding proteins, it binds directly to 16S rRNA where it nucleates assembly of the body of the 30S subunit. With S5 and S12 plays an important role in translational accuracy. This chain is Small ribosomal subunit protein uS4, found in Hahella chejuensis (strain KCTC 2396).